An 87-amino-acid polypeptide reads, in one-letter code: Translation initiation factor IF-1 2 (87 aa).

The region spanning M1–K72 is the S1-like domain.

It belongs to the IF-1 family. In terms of assembly, component of the 30S ribosomal translation pre-initiation complex which assembles on the 30S ribosome in the order IF-2 and IF-3, IF-1 and N-formylmethionyl-tRNA(fMet); mRNA recruitment can occur at any time during PIC assembly.

It localises to the cytoplasm. In terms of biological role, one of the essential components for the initiation of protein synthesis. Stabilizes the binding of IF-2 and IF-3 on the 30S subunit to which N-formylmethionyl-tRNA(fMet) subsequently binds. Helps modulate mRNA selection, yielding the 30S pre-initiation complex (PIC). Upon addition of the 50S ribosomal subunit IF-1, IF-2 and IF-3 are released leaving the mature 70S translation initiation complex. In Burkholderia ambifaria (strain ATCC BAA-244 / DSM 16087 / CCUG 44356 / LMG 19182 / AMMD) (Burkholderia cepacia (strain AMMD)), this protein is Translation initiation factor IF-1 2.